The chain runs to 563 residues: Coiled-coil domain-containing protein 63 (563 aa).

The interval 1-29 (MSVLKKNRRKDSDTPQEPSEKAKEQQAEA) is disordered. A compositionally biased stretch (basic and acidic residues) spans 10-29 (KDSDTPQEPSEKAKEQQAEA). Coiled-coil stretches lie at residues 18 to 201 (PSEK…QLQH), 233 to 291 (AMKD…AKKH), and 341 to 422 (TELN…KKIN).

Functionally, plays a role in spermiogenesis. Involved in the elongation of flagella and the formation of sperm heads. This is Coiled-coil domain-containing protein 63 from Homo sapiens (Human).